The following is a 392-amino-acid chain: Quinolinate synthase (392 aa).

Positions 1 to 23 (MVDLPTTTPPAQPTTGNDEVDAL) are disordered. Iminosuccinate-binding residues include His57 and Ser74. Cys131 serves as a coordination point for [4Fe-4S] cluster. Iminosuccinate-binding positions include 163-165 (YIN) and Ser184. Cys254 is a [4Fe-4S] cluster binding site. Residues 280-282 (HPE) and Thr297 each bind iminosuccinate. Cys344 is a binding site for [4Fe-4S] cluster.

The protein belongs to the quinolinate synthase family. Type 3 subfamily. It depends on [4Fe-4S] cluster as a cofactor.

It is found in the cytoplasm. The catalysed reaction is iminosuccinate + dihydroxyacetone phosphate = quinolinate + phosphate + 2 H2O + H(+). The protein operates within cofactor biosynthesis; NAD(+) biosynthesis; quinolinate from iminoaspartate: step 1/1. Functionally, catalyzes the condensation of iminoaspartate with dihydroxyacetone phosphate to form quinolinate. This chain is Quinolinate synthase, found in Rhodopirellula baltica (strain DSM 10527 / NCIMB 13988 / SH1).